A 528-amino-acid chain; its full sequence is Protein MGF 505-7R (528 aa).

ANK repeat units follow at residues serine 54–tyrosine 83 and asparagine 261–threonine 291.

This sequence belongs to the asfivirus MGF 505 family. Interacts with host STING1. Interacts with host JAK1; this interaction leads to JAK1 degradation. Interacts with host JAK2; this interaction leads to JAK2 degradation. Interacts with host RELA; this interaction inhibits NF-kappa-B promoter activity.

It is found in the host cytoplasm. Plays a role in virus cell tropism, and may be required for efficient virus replication in macrophages. Interferes with host NF-kappa-B promoter activity mediated by TLR8. Mechanistically, inhibits the phosphorylation and subsequent nuclear translocation of host NF-kappa-B RELA subunit downstream of TLR8. Promotes the expression of the autophagy-related protein host ULK1 to degrade host STING and inhibit the interferon response. Also inhibits JAK1- and JAK2-mediated signaling and thus negatively regulates the IFN-gamma signaling. This African swine fever virus (isolate Tick/Malawi/Lil 20-1/1983) (ASFV) protein is Protein MGF 505-7R.